Consider the following 325-residue polypeptide: Heat-inducible transcription repressor HrcA (325 aa).

It belongs to the HrcA family.

In terms of biological role, negative regulator of class I heat shock genes (grpE-dnaK-dnaJ and groELS operons). Prevents heat-shock induction of these operons. In Staphylococcus haemolyticus (strain JCSC1435), this protein is Heat-inducible transcription repressor HrcA.